Here is a 115-residue protein sequence, read N- to C-terminus: uncharacterized protein (115 aa).

Belongs to the herpesviridae BLRF2 family.

This is an uncharacterized protein from Saimiriine herpesvirus 2 (strain 11) (SaHV-2).